The primary structure comprises 505 residues: Adenylosuccinate synthetase, chloroplastic (505 aa).

A chloroplast-targeting transit peptide spans 1 to 60 (MTTMNISTLRLDSNPITTSTKSTTHRSGALGYNGSYSCRLLQFQKKNKAPSIIVCSTKPL). GTP-binding positions include 92 to 98 (GDEGKGK) and 120 to 122 (GHT). Asp-93 serves as the catalytic Proton acceptor. Mg(2+) is bound by residues Asp-93 and Gly-120. IMP contacts are provided by residues 93–96 (DEGK), 118–121 (NAGH), Thr-210, Arg-224, Gln-304, Thr-319, and Arg-383. His-121 acts as the Proton donor in catalysis. 379 to 385 (TTTGRPR) contacts substrate. GTP contacts are provided by residues Arg-385, 411 to 413 (KLD), and 494 to 496 (GVG).

It belongs to the adenylosuccinate synthetase family. In terms of assembly, homodimer. Requires Mg(2+) as cofactor.

Its subcellular location is the plastid. The protein localises to the chloroplast. It carries out the reaction IMP + L-aspartate + GTP = N(6)-(1,2-dicarboxyethyl)-AMP + GDP + phosphate + 2 H(+). It participates in purine metabolism; AMP biosynthesis via de novo pathway; AMP from IMP: step 1/2. Functionally, plays an important role in the de novo pathway and in the salvage pathway of purine nucleotide biosynthesis. Catalyzes the first committed step in the biosynthesis of AMP from IMP. The polypeptide is Adenylosuccinate synthetase, chloroplastic (Nicotiana tabacum (Common tobacco)).